Here is a 74-residue protein sequence, read N- to C-terminus: Antimicrobial peptide HsAp2 (74 aa).

An N-terminal signal peptide occupies residues 1 to 21 (MSRRLILILVLVAMLVKTMAG). Residues 22–33 (MESKWVETTYEI) constitute a propeptide that is removed on maturation. A Proline amide modification is found at proline 65. The propeptide occupies 69-74 (AISEQT).

This sequence belongs to the non-disulfide-bridged peptide (NDBP) superfamily. Medium-length antimicrobial peptide (group 3) family. As to expression, expressed by the venom gland.

The protein localises to the secreted. The protein resides in the target cell membrane. Its function is as follows. Possesses antimicrobial activity against both Gram-negative and Gram-positive bacteria, as well as against the fungus C.tropicalis. Also possesses a relatively high hemolytic activity. May act by disrupting the integrity of the bacterial cell membrane. The protein is Antimicrobial peptide HsAp2 of Heterometrus spinifer (Asia giant forest scorpion).